We begin with the raw amino-acid sequence, 149 residues long: Calmodulin-like protein (149 aa).

EF-hand domains follow at residues 6-41 (TTQA…VGSN), 42-76 (PTQQ…KMKY), 78-113 (DSEA…IGEK), and 113-148 (KLTK…SKSF). Ca(2+)-binding residues include D19, D21, D23, K25, and E30.

This sequence belongs to the calmodulin family.

The protein resides in the contractile vacuole. Its function is as follows. Mediates the control of a large number of enzymes, ion channels and other proteins by Ca(2+) ions. Among the enzymes to be stimulated by the calmodulin-Ca(2+) complex are a number of protein kinases and phosphatases. The protein is Calmodulin-like protein (calB) of Dictyostelium discoideum (Social amoeba).